A 121-amino-acid chain; its full sequence is Large ribosomal subunit protein uL18 (121 aa).

This sequence belongs to the universal ribosomal protein uL18 family. In terms of assembly, part of the 50S ribosomal subunit; part of the 5S rRNA/L5/L18/L25 subcomplex. Contacts the 5S and 23S rRNAs.

Its function is as follows. This is one of the proteins that bind and probably mediate the attachment of the 5S RNA into the large ribosomal subunit, where it forms part of the central protuberance. The polypeptide is Large ribosomal subunit protein uL18 (Albidiferax ferrireducens (strain ATCC BAA-621 / DSM 15236 / T118) (Rhodoferax ferrireducens)).